Here is a 221-residue protein sequence, read N- to C-terminus: uncharacterized protein (221 aa).

This is an uncharacterized protein from Escherichia coli (strain K12).